Here is a 398-residue protein sequence, read N- to C-terminus: Mitogen-activated protein kinase 1 (398 aa).

The disordered stretch occupies residues 1–26; that stretch reads MDAGAQPPDTEMAEAGGGQQPPAAAA. The 286-residue stretch at 67 to 352 folds into the Protein kinase domain; that stretch reads KPPILPIGKG…VEGALAHPYL (286 aa). ATP contacts are provided by residues 73-81 and K96; that span reads IGKGAYGIV. D193 serves as the catalytic Proton acceptor. The residue at position 225 (T225) is a Phosphothreonine. The TXY signature appears at 225 to 227; it reads TEY. Y227 carries the phosphotyrosine modification.

This sequence belongs to the protein kinase superfamily. CMGC Ser/Thr protein kinase family. MAP kinase subfamily. May interact with RAC1. Dually phosphorylated on Thr-225 and Tyr-227, which activates the enzyme.

It catalyses the reaction L-seryl-[protein] + ATP = O-phospho-L-seryl-[protein] + ADP + H(+). The catalysed reaction is L-threonyl-[protein] + ATP = O-phospho-L-threonyl-[protein] + ADP + H(+). Activated by threonine and tyrosine phosphorylation. Activated in response to sphingolipid elicitor (SE). Functionally, involved in sphingolipid elicitor (SE)-dependent defense signaling pathway. Acts downstream of heterotrimeric G protein alpha subunit and small GTPase RAC1. May regulate the expression of various genes involved in biotic and abiotic stress response. Involved in an abscisic acid signaling pathway that regulates the activities of antioxidant enzymes and the production of hydrogen peroxide. Acts downstream of CCAMK. This is Mitogen-activated protein kinase 1 (MPK1) from Oryza sativa subsp. japonica (Rice).